We begin with the raw amino-acid sequence, 709 residues long: MTFTKKNVSVSQGPDPRSSIQKERDSSKWNPQQMNYFLEGSVERSELMKALAQQMERDPILFTDGSYYDLTKDQQRELTAVKINRIARYREQESIDTFNKRLSLIGIFDPQVGTRIGVNLGLFLSCIRGNGTTSQLNYWANEKETADVKGIYGCFGMTELAHGSNVAGLETTATFDKESDEFVINTPHIGATKWWIGGAAHSATHCSVYARLIVDGQDYGVKTFVVPLRDSNHDLMPGVTVGDIGPKMGRDGIDNGWIQFSNVRIPRFFMLQKFCKVSAEGEVTLPPLEQLSYSALLGGRVMMVLDSYRMLARMSTIALRYAIGRRQFKGDNVDPNDPNALETQLIDYPLHQKRLFPYFVPPMSSPSVPSRLNTPSRPPWSNWTSPLKRTTPRLIFKSIDDMKSLFVDSGSLKSTATWLGAEAIDQCRQACGGHGHSSYNGFGKAYNDWVVQCTWEGDNNVLGMSVGKPIVKQVISIEDAGKTVRGSTAFLNQLKEYTGSNSSKVVLNTVADLDDIKTVIKAIEVAIIRLSQEAASIVKKESFDYVGAELVQLSKLKAHHYLLTEYIRRIDTFDQKELAPYLITLGKLYAATIVLDRFAGVFLTFNVASTEAITALASVQIPKLCAEVRPNVVAYTDSFQQSDMIVNSAIGRYDGDIYENYFDLVKLQNPPSKTKAPYSDALEAMLNRPTLDERERFQKSDETAAILSK.

A compositionally biased stretch (polar residues) spans 1-12; sequence MTFTKKNVSVSQ. The segment at 1–29 is disordered; the sequence is MTFTKKNVSVSQGPDPRSSIQKERDSSKW.

The protein belongs to the acyl-CoA oxidase family. Homooctamer. Requires FAD as cofactor.

It localises to the peroxisome. The enzyme catalyses a 2,3-saturated acyl-CoA + O2 = a (2E)-enoyl-CoA + H2O2. It functions in the pathway lipid metabolism; peroxisomal fatty acid beta-oxidation. This chain is Acyl-coenzyme A oxidase 4 (POX4), found in Candida tropicalis (Yeast).